The sequence spans 61 residues: [Thr6]-bradykinyl-Val,Asp (61 aa).

The N-terminal stretch at 1-22 (MSFLKKSLFLVLFLGFVSFSIC) is a signal peptide. Residues 23–50 (EEEKREDEEEENEREENKESEEKRNQEE) constitute a propeptide that is removed on maturation. A disordered region spans residues 24–61 (EEKREDEEEENEREENKESEEKRNQEERPPGFTPFRVD). The segment covering 26–36 (KREDEEEENER) has biased composition (acidic residues). A compositionally biased stretch (basic and acidic residues) spans 37-52 (EENKESEEKRNQEERP). The residue at position 53 (proline 53) is a 4-hydroxyproline; in form [Hyp3,Thr6]-bradykinyl-Val,Asp and [Hyp3,Thr6]-bradykinin.

The protein belongs to the frog skin active peptide (FSAP) family. Bradykinin-related peptide subfamily. As to expression, expressed by the skin glands.

It localises to the secreted. In terms of biological role, induces relaxation of rat smooth muscle from tail artery (EC(50)=16.8 nM) and contraction of that from ileum (EC(50)=205 nM), urinary bladder (EC(50)=895 nM) and uterus (EC(50)=60.3 nM). Binds to both bradykinin receptor B1 (BDKRB1) and B2 (BDKRB2). Functionally, [Hyp3,Thr6]-bradykinin: Induces relaxation of rat smooth muscle from tail artery (EC(50)=56.7 nM) and contraction of that from ileum (EC(50)=588 nM), urinary bladder (EC(50)=4.6 uM) and uterus (EC(50)=3.9 nM). Binds to both bradykinin receptor B1 (BDKRB1) and B2 (BDKRB2). In arterial smooth muscle, the effect via BDKRB1 is stronger, in uterus, ileum and urinary bladder the effect via BDKRB2. Its function is as follows. Induces relaxation of rat smooth muscle from tail artery (EC(50)=10.8 nM) and contraction of that from ileum (EC(50)=645 nM), urinary bladder (EC(50)=1.1 uM) and uterus (EC(50)=1.2 uM). Binds to both bradykinin receptor B1 (BDKRB1) and B2 (BDKRB2). Apart from uterus smooth muscle, the effect via BDKRB2 is stronger. [Hyp3,Thr6]-bradykinyl-Val,Asp: Induces relaxation of rat smooth muscle from tail artery (EC(50)=3.5 nM) and contraction of that from ileum (EC(50)=223 nM), urinary bladder (EC(50)=1.5 uM) and uterus (EC(50)=356 nM). Binds to both bradykinin receptor B1 (BDKRB1) and B2 (BDKRB2); the effects via BDKRB2 are stronger. The polypeptide is [Thr6]-bradykinyl-Val,Asp (Agalychnis dacnicolor (Giant Mexican leaf frog)).